A 204-amino-acid polypeptide reads, in one-letter code: Thiamine-phosphate synthase (204 aa).

Residues 37–41 (QVREK) and N69 contribute to the 4-amino-2-methyl-5-(diphosphooxymethyl)pyrimidine site. Positions 70 and 89 each coordinate Mg(2+). Position 108 (S108) interacts with 4-amino-2-methyl-5-(diphosphooxymethyl)pyrimidine. 134 to 136 (TGT) contributes to the 2-[(2R,5Z)-2-carboxy-4-methylthiazol-5(2H)-ylidene]ethyl phosphate binding site. K137 is a binding site for 4-amino-2-methyl-5-(diphosphooxymethyl)pyrimidine. Residues G165 and 185–186 (IS) contribute to the 2-[(2R,5Z)-2-carboxy-4-methylthiazol-5(2H)-ylidene]ethyl phosphate site.

It belongs to the thiamine-phosphate synthase family. The cofactor is Mg(2+).

It catalyses the reaction 2-[(2R,5Z)-2-carboxy-4-methylthiazol-5(2H)-ylidene]ethyl phosphate + 4-amino-2-methyl-5-(diphosphooxymethyl)pyrimidine + 2 H(+) = thiamine phosphate + CO2 + diphosphate. It carries out the reaction 2-(2-carboxy-4-methylthiazol-5-yl)ethyl phosphate + 4-amino-2-methyl-5-(diphosphooxymethyl)pyrimidine + 2 H(+) = thiamine phosphate + CO2 + diphosphate. The enzyme catalyses 4-methyl-5-(2-phosphooxyethyl)-thiazole + 4-amino-2-methyl-5-(diphosphooxymethyl)pyrimidine + H(+) = thiamine phosphate + diphosphate. The protein operates within cofactor biosynthesis; thiamine diphosphate biosynthesis; thiamine phosphate from 4-amino-2-methyl-5-diphosphomethylpyrimidine and 4-methyl-5-(2-phosphoethyl)-thiazole: step 1/1. Functionally, condenses 4-methyl-5-(beta-hydroxyethyl)thiazole monophosphate (THZ-P) and 2-methyl-4-amino-5-hydroxymethyl pyrimidine pyrophosphate (HMP-PP) to form thiamine monophosphate (TMP). The sequence is that of Thiamine-phosphate synthase from Clostridium novyi (strain NT).